Reading from the N-terminus, the 226-residue chain is ATP synthase F(0) complex subunit a (226 aa).

Transmembrane regions (helical) follow at residues 6–26, 68–88, 97–117, 138–158, 164–184, and 189–209; these read FASF…IILF, WSLM…LGLL, QLSM…VMGF, IPML…ALAV, ITAG…LSTI, and ALII…VALI.

The protein belongs to the ATPase A chain family. As to quaternary structure, component of the ATP synthase complex composed at least of ATP5F1A/subunit alpha, ATP5F1B/subunit beta, ATP5MC1/subunit c (homooctomer), MT-ATP6/subunit a, MT-ATP8/subunit 8, ATP5ME/subunit e, ATP5MF/subunit f, ATP5MG/subunit g, ATP5MK/subunit k, ATP5MJ/subunit j, ATP5F1C/subunit gamma, ATP5F1D/subunit delta, ATP5F1E/subunit epsilon, ATP5PF/subunit F6, ATP5PB/subunit b, ATP5PD/subunit d, ATP5PO/subunit OSCP. ATP synthase complex consists of a soluble F(1) head domain (subunits alpha(3) and beta(3)) - the catalytic core - and a membrane F(0) domain - the membrane proton channel (subunits c, a, 8, e, f, g, k and j). These two domains are linked by a central stalk (subunits gamma, delta, and epsilon) rotating inside the F1 region and a stationary peripheral stalk (subunits F6, b, d, and OSCP). Interacts with DNAJC30; interaction is direct.

The protein resides in the mitochondrion inner membrane. It carries out the reaction H(+)(in) = H(+)(out). Subunit a, of the mitochondrial membrane ATP synthase complex (F(1)F(0) ATP synthase or Complex V) that produces ATP from ADP in the presence of a proton gradient across the membrane which is generated by electron transport complexes of the respiratory chain. ATP synthase complex consist of a soluble F(1) head domain - the catalytic core - and a membrane F(1) domain - the membrane proton channel. These two domains are linked by a central stalk rotating inside the F(1) region and a stationary peripheral stalk. During catalysis, ATP synthesis in the catalytic domain of F(1) is coupled via a rotary mechanism of the central stalk subunits to proton translocation. With the subunit c (ATP5MC1), forms the proton-conducting channel in the F(0) domain, that contains two crucial half-channels (inlet and outlet) that facilitate proton movement from the mitochondrial intermembrane space (IMS) into the matrix. Protons are taken up via the inlet half-channel and released through the outlet half-channel, following a Grotthuss mechanism. In Pan troglodytes (Chimpanzee), this protein is ATP synthase F(0) complex subunit a.